The primary structure comprises 324 residues: MSEIDLEDLPGVGATTAEKLREAGYGTVESVATATTSDLAEAAEIGEATAKKVILAARKMADIGGFKTGRDILDKRKDIKKLRTLVPEFDELVGGGLETQAITEVYGEFGSGKSQLVHQMAVNAQLPEELGGLGGGVIYVDTENTFRPERIEQMLNGLPEEAEIGEIEEVLERIHVARAHSSDHQMLLLETARELANDLRTSDYPVRLFVIDSLTSLFRSEYAGRGTLAPRQQKLNRHMHDLLKLIDDHNAVGLVTNQVMSNPGILFGDPTKPIGGNIVGHTATFRLYLRKSKGGKRVARLVDSPNLPEGEAAFMVEQAGLKPC.

Position 107-114 (107-114 (GEFGSGKS)) interacts with ATP.

This sequence belongs to the eukaryotic RecA-like protein family.

Involved in DNA repair and in homologous recombination. Binds and assemble on single-stranded DNA to form a nucleoprotein filament. Hydrolyzes ATP in a ssDNA-dependent manner and promotes DNA strand exchange between homologous DNA molecules. The sequence is that of DNA repair and recombination protein RadA from Methanoculleus marisnigri (strain ATCC 35101 / DSM 1498 / JR1).